A 301-amino-acid polypeptide reads, in one-letter code: Ribonuclease Z (301 aa).

Residues H63, H65, D67, H68, H141, D204, and H262 each coordinate Zn(2+). The active-site Proton acceptor is D67.

This sequence belongs to the RNase Z family. Homodimer. It depends on Zn(2+) as a cofactor.

It catalyses the reaction Endonucleolytic cleavage of RNA, removing extra 3' nucleotides from tRNA precursor, generating 3' termini of tRNAs. A 3'-hydroxy group is left at the tRNA terminus and a 5'-phosphoryl group is left at the trailer molecule.. In terms of biological role, zinc phosphodiesterase, which displays some tRNA 3'-processing endonuclease activity. Probably involved in tRNA maturation, by removing a 3'-trailer from precursor tRNA. The protein is Ribonuclease Z of Streptomyces avermitilis (strain ATCC 31267 / DSM 46492 / JCM 5070 / NBRC 14893 / NCIMB 12804 / NRRL 8165 / MA-4680).